We begin with the raw amino-acid sequence, 644 residues long: Protein FAM149B1 (644 aa).

Disordered regions lie at residues 392–490 (NQSD…NTLL), 551–575 (TFRS…RPGR), and 609–644 (GHFP…RPGL). Over residues 395–404 (DCRDSEDKVS) the composition is skewed to basic and acidic residues. Positions 449–459 (PITSSVTQPIT) are enriched in polar residues. Residues 626–644 (QARSHNRGGSTARSSRPGL) are compositionally biased toward polar residues.

Belongs to the FAM149 family.

The sequence is that of Protein FAM149B1 (fam149b1) from Danio rerio (Zebrafish).